Reading from the N-terminus, the 416-residue chain is D-amino acid dehydrogenase (416 aa).

3 to 17 (VIVLGAGIVGVTSAY) serves as a coordination point for FAD.

The protein belongs to the DadA oxidoreductase family. Requires FAD as cofactor.

The catalysed reaction is a D-alpha-amino acid + A + H2O = a 2-oxocarboxylate + AH2 + NH4(+). It participates in amino-acid degradation; D-alanine degradation; NH(3) and pyruvate from D-alanine: step 1/1. Functionally, oxidative deamination of D-amino acids. In Rhizobium johnstonii (strain DSM 114642 / LMG 32736 / 3841) (Rhizobium leguminosarum bv. viciae), this protein is D-amino acid dehydrogenase.